The following is a 330-amino-acid chain: Ketol-acid reductoisomerase (NADP(+)) (330 aa).

The region spanning 1–181 (MNAYYEQDAD…GGTKAGVIET (181 aa)) is the KARI N-terminal Rossmann domain. NADP(+) is bound by residues 24 to 27 (FGSQ), Arg47, Ser50, Ser52, and 82 to 85 (DQYQ). The active site involves His107. Gly133 contacts NADP(+). The 146-residue stretch at 182-327 (TFKNETETDL…AKLRDMMSWL (146 aa)) folds into the KARI C-terminal knotted domain. The Mg(2+) site is built by Asp190, Glu194, Glu226, and Glu230. Residue Ser251 coordinates substrate.

Belongs to the ketol-acid reductoisomerase family. It depends on Mg(2+) as a cofactor.

It catalyses the reaction (2R)-2,3-dihydroxy-3-methylbutanoate + NADP(+) = (2S)-2-acetolactate + NADPH + H(+). It carries out the reaction (2R,3R)-2,3-dihydroxy-3-methylpentanoate + NADP(+) = (S)-2-ethyl-2-hydroxy-3-oxobutanoate + NADPH + H(+). It participates in amino-acid biosynthesis; L-isoleucine biosynthesis; L-isoleucine from 2-oxobutanoate: step 2/4. Its pathway is amino-acid biosynthesis; L-valine biosynthesis; L-valine from pyruvate: step 2/4. In terms of biological role, involved in the biosynthesis of branched-chain amino acids (BCAA). Catalyzes an alkyl-migration followed by a ketol-acid reduction of (S)-2-acetolactate (S2AL) to yield (R)-2,3-dihydroxy-isovalerate. In the isomerase reaction, S2AL is rearranged via a Mg-dependent methyl migration to produce 3-hydroxy-3-methyl-2-ketobutyrate (HMKB). In the reductase reaction, this 2-ketoacid undergoes a metal-dependent reduction by NADPH to yield (R)-2,3-dihydroxy-isovalerate. The sequence is that of Ketol-acid reductoisomerase (NADP(+)) from Chlorobium phaeobacteroides (strain BS1).